The primary structure comprises 434 residues: Serine--tRNA ligase (434 aa).

230 to 232 (TSE) provides a ligand contact to L-serine. Residues 261-263 (RRE) and Val277 contribute to the ATP site. Glu284 serves as a coordination point for L-serine. 348–351 (ELTS) provides a ligand contact to ATP. Thr393 lines the L-serine pocket.

This sequence belongs to the class-II aminoacyl-tRNA synthetase family. Type-1 seryl-tRNA synthetase subfamily. In terms of assembly, homodimer. The tRNA molecule binds across the dimer.

Its subcellular location is the cytoplasm. The catalysed reaction is tRNA(Ser) + L-serine + ATP = L-seryl-tRNA(Ser) + AMP + diphosphate + H(+). It catalyses the reaction tRNA(Sec) + L-serine + ATP = L-seryl-tRNA(Sec) + AMP + diphosphate + H(+). The protein operates within aminoacyl-tRNA biosynthesis; selenocysteinyl-tRNA(Sec) biosynthesis; L-seryl-tRNA(Sec) from L-serine and tRNA(Sec): step 1/1. In terms of biological role, catalyzes the attachment of serine to tRNA(Ser). Is also able to aminoacylate tRNA(Sec) with serine, to form the misacylated tRNA L-seryl-tRNA(Sec), which will be further converted into selenocysteinyl-tRNA(Sec). The protein is Serine--tRNA ligase of Kocuria rhizophila (strain ATCC 9341 / DSM 348 / NBRC 103217 / DC2201).